Here is a 356-residue protein sequence, read N- to C-terminus: Protein RecA (356 aa).

Gly-68–Thr-75 is a binding site for ATP.

This sequence belongs to the RecA family.

The protein resides in the cytoplasm. Functionally, can catalyze the hydrolysis of ATP in the presence of single-stranded DNA, the ATP-dependent uptake of single-stranded DNA by duplex DNA, and the ATP-dependent hybridization of homologous single-stranded DNAs. It interacts with LexA causing its activation and leading to its autocatalytic cleavage. In Thermotoga maritima (strain ATCC 43589 / DSM 3109 / JCM 10099 / NBRC 100826 / MSB8), this protein is Protein RecA.